The following is a 71-amino-acid chain: MLYPPINELLDKVDSRYTLVVAAAKRARQLIDGAVPKIEMPYSKKPVSIATQEIYESYVLYTSGEDETDIE.

This sequence belongs to the RNA polymerase subunit omega family. In terms of assembly, the RNAP catalytic core consists of 2 alpha, 1 beta, 1 beta' and 1 omega subunit. When a sigma factor is associated with the core the holoenzyme is formed, which can initiate transcription.

The enzyme catalyses RNA(n) + a ribonucleoside 5'-triphosphate = RNA(n+1) + diphosphate. Its function is as follows. Promotes RNA polymerase assembly. Latches the N- and C-terminal regions of the beta' subunit thereby facilitating its interaction with the beta and alpha subunits. This is DNA-directed RNA polymerase subunit omega from Alkaliphilus oremlandii (strain OhILAs) (Clostridium oremlandii (strain OhILAs)).